A 143-amino-acid polypeptide reads, in one-letter code: Large ribosomal subunit protein uL15 (143 aa).

Positions 1 to 47 are disordered; it reads MKLHELTPSEGSRFSRRRIGRGDSSGQGKTSGRGQKGQKARGKVRVG. Residues 23–35 show a composition bias toward gly residues; the sequence is DSSGQGKTSGRGQ.

Belongs to the universal ribosomal protein uL15 family. Part of the 50S ribosomal subunit.

Functionally, binds to the 23S rRNA. This is Large ribosomal subunit protein uL15 from Lactiplantibacillus plantarum (strain ATCC BAA-793 / NCIMB 8826 / WCFS1) (Lactobacillus plantarum).